The sequence spans 169 residues: Tumor suppressor ARF (169 aa).

The interval 1–63 (MGRRFLVTVR…RRGPHRNPGP (63 aa)) is interaction with CDK5RAP3 and MDM2. A disordered region spans residues 54 to 73 (RRGPHRNPGPGDDDGQRSRS).

As to quaternary structure, does not interact with cyclins, CDK1, CDK2, CDK4, CDK5 or CDK6. Interacts with COMMD1. Binds to BCL6, E2F1, HUWE1, MDM2, MYC, NPM1/B23, TOP1/TOPOI and UBE2I/UBC9. Interacts with TBRG1. Interacts with CDKN2AIP and E4F1. Interacts with CDK5RAP3 and MDM2; form a ternary complex involved in regulation of p53/TP53. Interacts with NOP53; the interaction is direct and promotes ARF nucleoplasmic relocalization and ubiquitin-mediated proteasomal degradation. Interacts with TTF1 (via the N-terminal region (NRD) and a C-terminal region); the interaction is direct and inhibits the nucleolar localization of TTF1. In terms of assembly, interacts with C1QBP. Ubiquitinated in normal cells by TRIP12 via the ubiquitin fusion degradation (UFD) pathway, a process that mediates ubiquitination at the N-terminus, regardless of the absence of lysine residues. Ubiquitination leads to its proteasomal degradation. In cancer cells, however, TRIP12 is located in a different cell compartment, preventing ubiquitination and degradation.

It is found in the nucleus. The protein localises to the nucleolus. The protein resides in the nucleoplasm. Its subcellular location is the mitochondrion. Functionally, capable of inducing cell cycle arrest in G1 and G2 phases. Acts as a tumor suppressor. Binds to MDM2 and blocks its nucleocytoplasmic shuttling by sequestering it in the nucleolus. This inhibits the oncogenic action of MDM2 by blocking MDM2-induced degradation of p53 and enhancing p53-dependent transactivation and apoptosis. Also induces G2 arrest and apoptosis in a p53-independent manner by preventing the activation of cyclin B1/CDC2 complexes. Binds to BCL6 and down-regulates BCL6-induced transcriptional repression. Binds to E2F1 and MYC and blocks their transcriptional activator activity but has no effect on MYC transcriptional repression. Binds to TOP1/TOPOI and stimulates its activity. This complex binds to rRNA gene promoters and may play a role in rRNA transcription and/or maturation. Interacts with NPM1/B23 and promotes its polyubiquitination and degradation, thus inhibiting rRNA processing. Plays a role in inhibiting ribosome biogenesis, perhaps by binding to the nucleolar localization sequence of transcription termination factor TTF1, and thereby preventing nucleolar localization of TTF1. Interacts with COMMD1 and promotes its 'Lys63'-linked polyubiquitination. Interacts with UBE2I/UBC9 and enhances sumoylation of a number of its binding partners including MDM2 and E2F1. Binds to HUWE1 and represses its ubiquitin ligase activity. May play a role in controlling cell proliferation and apoptosis during mammary gland development. May be involved in regulation of autophagy and caspase-independent cell death; the short-lived mitochondrial isoform is stabilized by C1QBP. This chain is Tumor suppressor ARF, found in Mus musculus (Mouse).